The primary structure comprises 257 residues: Sad1-interacting factor 1 (257 aa).

The segment at 16–68 (LNKIKQGGASRINQILGQNSDDSQSDVRATASEEAVHSETATPVTPMSSGFME) is disordered. 2 stretches are compositionally biased toward polar residues: residues 26 to 37 (RINQILGQNSDD) and 54 to 63 (ETATPVTPMS). At Ser-35 the chain carries Phosphoserine. A Phosphoserine modification is found at Ser-132. Residue Thr-134 is modified to Phosphothreonine. Transmembrane regions (helical) follow at residues 160–180 (LLAISIVVIVCYFKHLPLLPW) and 231–251 (FTQLITDACMTIFALGLCCYF).

Interacts with kms1 and sad1.

Its subcellular location is the membrane. The protein is Sad1-interacting factor 1 (sif1) of Schizosaccharomyces pombe (strain 972 / ATCC 24843) (Fission yeast).